A 100-amino-acid polypeptide reads, in one-letter code: Large ribosomal subunit protein uL23 (100 aa).

This sequence belongs to the universal ribosomal protein uL23 family. As to quaternary structure, part of the 50S ribosomal subunit. Contacts protein L29, and trigger factor when it is bound to the ribosome.

Its function is as follows. One of the early assembly proteins it binds 23S rRNA. One of the proteins that surrounds the polypeptide exit tunnel on the outside of the ribosome. Forms the main docking site for trigger factor binding to the ribosome. In Shewanella halifaxensis (strain HAW-EB4), this protein is Large ribosomal subunit protein uL23.